Here is a 380-residue protein sequence, read N- to C-terminus: Queuine tRNA-ribosyltransferase (380 aa).

Asp-96 serves as the catalytic Proton acceptor. Substrate-binding positions include 96–100, Asp-150, Gln-193, and Gly-220; that span reads DSGGF. The segment at 251-257 is RNA binding; that stretch reads GVGAPDS. Asp-270 acts as the Nucleophile in catalysis. The interval 275–279 is RNA binding; important for wobble base 34 recognition; the sequence is TRIAR. Residues Cys-308, Cys-310, Cys-313, and His-339 each contribute to the Zn(2+) site.

Belongs to the queuine tRNA-ribosyltransferase family. As to quaternary structure, homodimer. Within each dimer, one monomer is responsible for RNA recognition and catalysis, while the other monomer binds to the replacement base PreQ1. The cofactor is Zn(2+).

It carries out the reaction 7-aminomethyl-7-carbaguanine + guanosine(34) in tRNA = 7-aminomethyl-7-carbaguanosine(34) in tRNA + guanine. It participates in tRNA modification; tRNA-queuosine biosynthesis. Its function is as follows. Catalyzes the base-exchange of a guanine (G) residue with the queuine precursor 7-aminomethyl-7-deazaguanine (PreQ1) at position 34 (anticodon wobble position) in tRNAs with GU(N) anticodons (tRNA-Asp, -Asn, -His and -Tyr). Catalysis occurs through a double-displacement mechanism. The nucleophile active site attacks the C1' of nucleotide 34 to detach the guanine base from the RNA, forming a covalent enzyme-RNA intermediate. The proton acceptor active site deprotonates the incoming PreQ1, allowing a nucleophilic attack on the C1' of the ribose to form the product. After dissociation, two additional enzymatic reactions on the tRNA convert PreQ1 to queuine (Q), resulting in the hypermodified nucleoside queuosine (7-(((4,5-cis-dihydroxy-2-cyclopenten-1-yl)amino)methyl)-7-deazaguanosine). This chain is Queuine tRNA-ribosyltransferase, found in Streptococcus suis (strain 98HAH33).